Consider the following 77-residue polypeptide: uncharacterized protein (77 aa).

To E.coli YdfK.

This is an uncharacterized protein from Escherichia coli (strain K12).